Reading from the N-terminus, the 174-residue chain is Endoribonuclease YbeY (174 aa).

Zn(2+) contacts are provided by His129, His133, and His139.

Belongs to the endoribonuclease YbeY family. The cofactor is Zn(2+).

The protein localises to the cytoplasm. Single strand-specific metallo-endoribonuclease involved in late-stage 70S ribosome quality control and in maturation of the 3' terminus of the 16S rRNA. In Lactobacillus delbrueckii subsp. bulgaricus (strain ATCC 11842 / DSM 20081 / BCRC 10696 / JCM 1002 / NBRC 13953 / NCIMB 11778 / NCTC 12712 / WDCM 00102 / Lb 14), this protein is Endoribonuclease YbeY.